The primary structure comprises 734 residues: Photosystem I P700 chlorophyll a apoprotein A2 (734 aa).

8 helical membrane passes run 46-69 (IFAS…FHVA), 135-158 (LYQG…LHLQ), 175-199 (LNHH…HVAI), 273-291 (IAHH…GHQY), 330-353 (LHFQ…QHMY), 369-395 (AALY…IFFI), 417-439 (AIIS…LYVH), and 517-535 (FLVH…LILV). Residues Cys559 and Cys568 each contribute to the [4Fe-4S] cluster site. Helical transmembrane passes span 575-596 (AFYL…YWHW) and 643-665 (LSVW…MFLI). Chlorophyll a is bound by residues His654, Met662, and Tyr670. Trp671 provides a ligand contact to phylloquinone. The chain crosses the membrane as a helical span at residues 707 to 727 (LVGLAHFSVGYIFTYAAFLIA).

This sequence belongs to the PsaA/PsaB family. In terms of assembly, the PsaA/B heterodimer binds the P700 chlorophyll special pair and subsequent electron acceptors. PSI consists of a core antenna complex that captures photons, and an electron transfer chain that converts photonic excitation into a charge separation. The eukaryotic PSI reaction center is composed of at least 11 subunits. The cofactor is P700 is a chlorophyll a/chlorophyll a' dimer, A0 is one or more chlorophyll a, A1 is one or both phylloquinones and FX is a shared 4Fe-4S iron-sulfur center..

Its subcellular location is the plastid. The protein resides in the chloroplast thylakoid membrane. It carries out the reaction reduced [plastocyanin] + hnu + oxidized [2Fe-2S]-[ferredoxin] = oxidized [plastocyanin] + reduced [2Fe-2S]-[ferredoxin]. Functionally, psaA and PsaB bind P700, the primary electron donor of photosystem I (PSI), as well as the electron acceptors A0, A1 and FX. PSI is a plastocyanin-ferredoxin oxidoreductase, converting photonic excitation into a charge separation, which transfers an electron from the donor P700 chlorophyll pair to the spectroscopically characterized acceptors A0, A1, FX, FA and FB in turn. Oxidized P700 is reduced on the lumenal side of the thylakoid membrane by plastocyanin. This is Photosystem I P700 chlorophyll a apoprotein A2 from Chaetosphaeridium globosum (Charophycean green alga).